The primary structure comprises 678 residues: Penicillin-binding protein activator LpoA (678 aa).

The signal sequence occupies residues methionine 1–glycine 26. The N-palmitoyl cysteine moiety is linked to residue cysteine 27. Residue cysteine 27 is the site of S-diacylglycerol cysteine attachment. Low complexity-rich tracts occupy residues alanine 300–glutamine 310, glutamine 330–alanine 340, and threonine 513–phenylalanine 528. 2 disordered regions span residues alanine 300–alanine 340 and alanine 496–phenylalanine 528.

This sequence belongs to the LpoA family. In terms of assembly, interacts with PBP1a.

The protein localises to the cell outer membrane. Regulator of peptidoglycan synthesis that is essential for the function of penicillin-binding protein 1A (PBP1a). The protein is Penicillin-binding protein activator LpoA of Shigella flexneri serotype 5b (strain 8401).